A 410-amino-acid chain; its full sequence is Succinyl-CoA:(R)-benzylsuccinate CoA-transferase subunit BbsE (410 aa).

This sequence belongs to the CoA-transferase III family. Heterotetramer composed of 2 BbsE subunits and 2 BbsF subunits.

It carries out the reaction (R)-2-benzylsuccinate + succinyl-CoA = (R)-2-benzylsuccinyl-CoA + succinate. It functions in the pathway xenobiotic degradation; toluene degradation. Its activity is regulated as follows. Inhibited by (S)-benzylsuccinyl-CoA. Its function is as follows. Catalyzes the reversible conversion of (R)-2-benzylsuccinate to (R)-2-benzylsuccinyl-CoA. Inactive with (S)-benzylsuccinate. This chain is Succinyl-CoA:(R)-benzylsuccinate CoA-transferase subunit BbsE (bbsE), found in Thauera aromatica.